The primary structure comprises 51 residues: Large ribosomal subunit protein eL39 (51 aa).

Belongs to the eukaryotic ribosomal protein eL39 family.

The protein is Large ribosomal subunit protein eL39 (rpl39e) of Pyrococcus abyssi (strain GE5 / Orsay).